We begin with the raw amino-acid sequence, 168 residues long: Peptide deformylase (168 aa).

The Fe cation site is built by Cys91 and His133. Glu134 is an active-site residue. His137 is a Fe cation binding site.

The protein belongs to the polypeptide deformylase family. The cofactor is Fe(2+).

It carries out the reaction N-terminal N-formyl-L-methionyl-[peptide] + H2O = N-terminal L-methionyl-[peptide] + formate. In terms of biological role, removes the formyl group from the N-terminal Met of newly synthesized proteins. Requires at least a dipeptide for an efficient rate of reaction. N-terminal L-methionine is a prerequisite for activity but the enzyme has broad specificity at other positions. In Endomicrobium trichonymphae, this protein is Peptide deformylase.